Reading from the N-terminus, the 258-residue chain is Indole-3-glycerol phosphate synthase (258 aa).

This sequence belongs to the TrpC family.

It catalyses the reaction 1-(2-carboxyphenylamino)-1-deoxy-D-ribulose 5-phosphate + H(+) = (1S,2R)-1-C-(indol-3-yl)glycerol 3-phosphate + CO2 + H2O. It functions in the pathway amino-acid biosynthesis; L-tryptophan biosynthesis; L-tryptophan from chorismate: step 4/5. In Chlorobium phaeovibrioides (strain DSM 265 / 1930) (Prosthecochloris vibrioformis (strain DSM 265)), this protein is Indole-3-glycerol phosphate synthase.